Reading from the N-terminus, the 1352-residue chain is DNA-directed RNA polymerase subunit beta (1352 aa).

It belongs to the RNA polymerase beta chain family. In terms of assembly, the RNAP catalytic core consists of 2 alpha, 1 beta, 1 beta' and 1 omega subunit. When a sigma factor is associated with the core the holoenzyme is formed, which can initiate transcription.

It catalyses the reaction RNA(n) + a ribonucleoside 5'-triphosphate = RNA(n+1) + diphosphate. DNA-dependent RNA polymerase catalyzes the transcription of DNA into RNA using the four ribonucleoside triphosphates as substrates. The polypeptide is DNA-directed RNA polymerase subunit beta (Hydrogenovibrio crunogenus (strain DSM 25203 / XCL-2) (Thiomicrospira crunogena)).